We begin with the raw amino-acid sequence, 503 residues long: ATP synthase subunit alpha (503 aa).

171–178 (DRQTGKTA) provides a ligand contact to ATP.

It belongs to the ATPase alpha/beta chains family. As to quaternary structure, F-type ATPases have 2 components, CF(1) - the catalytic core - and CF(0) - the membrane proton channel. CF(1) has five subunits: alpha(3), beta(3), gamma(1), delta(1), epsilon(1). CF(0) has four main subunits: a(1), b(1), b'(1) and c(9-12).

Its subcellular location is the cellular thylakoid membrane. The enzyme catalyses ATP + H2O + 4 H(+)(in) = ADP + phosphate + 5 H(+)(out). Produces ATP from ADP in the presence of a proton gradient across the membrane. The alpha chain is a regulatory subunit. This chain is ATP synthase subunit alpha, found in Synechococcus sp. (strain PCC 6716).